A 446-amino-acid chain; its full sequence is Na(+)-translocating NADH-quinone reductase subunit A (446 aa).

Belongs to the NqrA family. Composed of six subunits; NqrA, NqrB, NqrC, NqrD, NqrE and NqrF.

It catalyses the reaction a ubiquinone + n Na(+)(in) + NADH + H(+) = a ubiquinol + n Na(+)(out) + NAD(+). NQR complex catalyzes the reduction of ubiquinone-1 to ubiquinol by two successive reactions, coupled with the transport of Na(+) ions from the cytoplasm to the periplasm. NqrA to NqrE are probably involved in the second step, the conversion of ubisemiquinone to ubiquinol. This Vibrio atlanticus (strain LGP32) (Vibrio splendidus (strain Mel32)) protein is Na(+)-translocating NADH-quinone reductase subunit A.